The following is a 2210-amino-acid chain: MAPVVSRDRHRHKIPKPHQPAPPHRCTVWCPEDCGWYVGRCSCPKSCQREGWDDFFVADKVKPPSYVASKTSVADVVDWLLEEDPATDGPSEFDLTQFFQAYTDKSHQIHRDYAPDQLAQALDMAYILSVDPPDIKLPEYEATRFTHDTSYKGKLPRWLRVYGFKSRELAKKAITNIKGGAHWAKGLFKQAWDTLPGWSEVEAYFKAFFAGIITGVEDALSKSPSSVWTSLKLTPLLYIWRNINECSDIPVILGAFWATLELYNIPSKVYDLVSTALGPMVQDLARRVINIIKGDGNGPKQEGGRPSFSIPGVLLATFLSAIILGSMPSDGIIKKVLRGCATAAGLVGGFNAVKSIITTVQGASACKDVKKLASQLMCVTTMAATVSTRGERQVLASMLNDLNESVRERLVDPAFAALVPQLSAMSSKIMELSTINAAALSAARKRVPAKIVVLCGPPGHGKSVAAHKLAKMLNPNEPSIWNPFSDHHDEYTAEDVVIIDETPAEPGQWVEDLIAMGSNSPFVPNYDRVENKTRCFDSKYVLITTNHNPLINPTHSRAAALARRLTWVYVNSPDVADFLRQHPGVAPPATLFKADCSHLNFDIHPYNSIGTTAVVGHNGTTPLPRAKRTSLEGLCKHIKDLPDREGPPDGVPERMVLVAPDKGTARFVEAVINTYHNSGLVAQPAAWDTTPQKYQLAVTWQGSTSSVVGQRWDCNPQTPFVAPHFTRNMFKRVLGTEVPEYHLLAYACRITSSSLGDKSLPVPNPTVVINDPSPTRLALALMRHLKNPIASGLRVVWDLFRGCATGPKRLFTWALSQEWNPMPVTTAFTFPAGTVILHTAGGVRVVVLPPGPQFGLTEVTHLADHSGQDDPVVPDMFGQTWTELLWRLLKVIGTFLANYGVAIAGLTLSIAAFKTANKSTRNDRQGWLSGSGVALSDEEYDEWMKYSKKKGKKINADEFLQLRHRAAMGNDDDDARDYRSFYTAYQLGREGNNCEDLPLHPAVGPTTGGGYYVHIGNGVGITLKHVASGEDVIKELGNDLVKIRARHHKMGDPAMVVGEGAPVKFVTGHLVVDARNESVVFDQTRLSVVRVKVPGLETQRGYCGLPYVNSAGHVVGLHQGSYGVGDKVFTPITDAPAASPDTIMWRGLECTRSDIVTHLPHGTKYSISPGMREEAHKCTHQPASLGRNDPRCNQTQVAMVVKALTPYTSAPAIEKLDPCMVAAITEVRTAIQSLTPKGGFRPLTFAAAWQSLDLSTSAGALAPGKTKRDLCDPDTGMPAGKYREMLLAAWSRAGTGTPLDHTYIVALKDELRPVEKVAEGKRRLIWGADARVALIASAALTPVANALKTVTNLLPIQVGVDPSSANCVSSWVGRLQRHDHCLELDYSKWDSTMSPVIINIAIDILCNTCGSDSLRMAVAQTLKSRPTALVEGVSVPTKSGLPSGMPFTSQINSIVHWILWSATVRKCSLPLHIGSVNELAPFLTYGDDGLYTIPSHLTKSIDEIISTLKGYGLSPTAPDKGANVEIKRTSFTYLSGPVFLKRRIVLTPGGHRALLDLTSLARQPVWVNGPRRSVWNHEAQPIEIDAETRTIQLQNVLIELAWHQPQDFDHVLALVVKSAEASGLTIPRYSQEEARAIYDGRYYGIQHVSLPNNSDLIREGNMSDNKSTPEQQHESSRAMDAGATGAAAAAPAPPVAAAPASGLVGALVAEPQSGPSAEQWRTAYTLFGTVSWNANAGPGTILTVGRLGPGMNPYTQHIAAMYGGWAGGMDIRITIAGSGFIGGTLAVAAIPPGVDPESVNVLRMPHVLIDARGGVPLEVTLEDIRTSLYHPMGDTNTASLVIAVMTGLINPLGTDTLSVTVQLETRPGRDWVFFSLLPPTAGVASADPSQLLTRVALATSPEVRFGTGVLGILGLPSNPSVNRVYDVQSRTRGWSFPIPSSSVFMGDARNVEHNRRVMVQSSAPNNPLSDVFPDGFPDFVPQSDTEPDGGAVIAGQVLPHPGDNDNFWRLTPVVRGNTTAAINTIPERFNQVYFINLADEEAVSAATEELRFNGIQGIFGQRTNARAVQVMQGYVPRAEHIIRPAGFAGVGPQGPNVPIGFAGTMPNFNATASGADDLVPVWGPTLVHTASLLAGTTYELAENSMYVFSVSTSTSTFELGMLANGTWLGPAQLAGTGITWTEVLSVTYMGMRFAYNPLSGQGIGGESRRL.

Residues 1-22 are disordered; it reads MAPVVSRDRHRHKIPKPHQPAP. Residues 426–585 enclose the SF3 helicase domain; the sequence is SSKIMELSTI…ADFLRQHPGV (160 aa). Residue 456-463 participates in ATP binding; sequence GPPGHGKS. Tyrosine 940 carries the O-(5'-phospho-RNA)-tyrosine modification. Residues 991 to 1136 form the Peptidase C24 domain; it reads GNNCEDLPLH…KVFTPITDAP (146 aa). Residues histidine 1025, aspartate 1039, and cysteine 1103 each act as for 3CLpro activity in the active site. A RdRp catalytic domain is found at 1379–1501; that stretch reads DHCLELDYSK…TIPSHLTKSI (123 aa). The tract at residues 1654-1686 is disordered; it reads SDLIREGNMSDNKSTPEQQHESSRAMDAGATGA.

Specific enzymatic cleavages by its own cysteine protease yield mature proteins. The protease cleaves itself from the nascent polyprotein autocatalytically. Precursor p41 can be cleaved by viral 3CLpro into protein p19 and VPg, or cleaved by host protease into protein p23/2 and protein p18. In terms of processing, VPg is uridylylated by the polymerase and is covalently attached to the 5'-end of the polyadenylated genomic and subgenomic RNAs. This uridylylated form acts as a nucleotide-peptide primer for the polymerase.

The protein localises to the virion. Its subcellular location is the host cytoplasm. It catalyses the reaction a ribonucleoside 5'-triphosphate + H2O = a ribonucleoside 5'-diphosphate + phosphate + H(+). The catalysed reaction is Endopeptidase with a preference for cleavage when the P1 position is occupied by Glu-|-Xaa and the P1' position is occupied by Gly-|-Yaa.. The enzyme catalyses RNA(n) + a ribonucleoside 5'-triphosphate = RNA(n+1) + diphosphate. Its function is as follows. Displays NTPase activity, but no helicase activity. Induces the formation of convoluted membranes derived from the host ER. These remodeled membranes probably form the viral factories that contain the replication complex. Together with NS2 and NS4, initiates the formation of the replication complex. Viral genome-linked protein is covalently linked to the 5'-end of the positive-strand, negative-strand genomic RNAs and subgenomic RNA. Acts as a genome-linked replication primer. May recruit ribosome to viral RNA thereby promoting viral proteins translation. Interacts with host translation initiation complex to allow the translation of viral proteins. Functionally, processes the polyprotein. 3CLpro-RdRp is first released by autocleavage, then all other proteins are cleaved. May cleave polyadenylate-binding protein thereby inhibiting cellular translation. In terms of biological role, replicates genomic and antigenomic RNA by recognizing replications specific signals. Also transcribes a subgenomic mRNA by initiating RNA synthesis internally on antigenomic RNA. This sgRNA codes for structural proteins. Catalyzes the covalent attachment VPg with viral RNAs. Its function is as follows. Capsid protein self assembles to form an icosahedral capsid with a T=3 symmetry, about 35 nm in diameter, and consisting of 180 capsid proteins. A smaller form of capsid with a diameter of 23 nm might be capsid proteins assembled as icosahedron with T=1 symmetry. The capsid encapsulate VP2 proteins and genomic or subgenomic RNA. Attaches virion to target cells by binding histo-blood group antigens, inducing endocytosis of the viral particle. Acidification of the endosome induces conformational change of capsid protein thereby injecting virus genomic RNA into host cytoplasm. The protein is Genome polyprotein of Bos taurus (Bovine).